We begin with the raw amino-acid sequence, 246 residues long: MLTMSTLVSNPLFELSEVSVGQHFYWNLGGNEVHGQVLLVSWFVLAVIIGFGLTANSNLKPTPDGLQNLSEYVTEFIRDLAKTQIGEEDYLSWVPFLGTIFLFVFVSNWSGALVPWALIELPSGELAAPTNDINTTVALALLTSIAYFYAGINKKGLGYFKRYVEPAAFLLPINVLEDFTKPLSLSFRLFGNILADELVTGVLVALVPLVIPIPLMLLGLFTSAIQALVFSTLAGAYIGESLEDHH.

A run of 5 helical transmembrane segments spans residues 33–53 (VHGQ…GFGL), 99–119 (TIFL…WALI), 133–153 (INTT…AGIN), 201–221 (GVLV…LGLF), and 222–242 (TSAI…GESL).

It belongs to the ATPase A chain family. In terms of assembly, F-type ATPases have 2 components, CF(1) - the catalytic core - and CF(0) - the membrane proton channel. CF(1) has five subunits: alpha(3), beta(3), gamma(1), delta(1), epsilon(1). CF(0) has four main subunits: a, b, b' and c.

It localises to the plastid. Its subcellular location is the chloroplast thylakoid membrane. Functionally, key component of the proton channel; it plays a direct role in the translocation of protons across the membrane. This chain is ATP synthase subunit a, chloroplastic, found in Oltmannsiellopsis viridis (Marine flagellate).